A 526-amino-acid polypeptide reads, in one-letter code: Peptide chain release factor 3 (526 aa).

A tr-type G domain is found at 8 to 277; it reads DKRRTFAIIS…GLTQWAPKPQ (270 aa). Residues 17-24, 85-89, and 139-142 contribute to the GTP site; these read SHPDAGKT, DTPGH, and NKLD.

It belongs to the TRAFAC class translation factor GTPase superfamily. Classic translation factor GTPase family. PrfC subfamily.

The protein localises to the cytoplasm. Increases the formation of ribosomal termination complexes and stimulates activities of RF-1 and RF-2. It binds guanine nucleotides and has strong preference for UGA stop codons. It may interact directly with the ribosome. The stimulation of RF-1 and RF-2 is significantly reduced by GTP and GDP, but not by GMP. This is Peptide chain release factor 3 from Actinobacillus succinogenes (strain ATCC 55618 / DSM 22257 / CCUG 43843 / 130Z).